The primary structure comprises 347 residues: Dihydroorotate dehydrogenase (quinone) (347 aa).

Residues 61–65 (AGLDK) and Thr-85 each bind FMN. Lys-65 contributes to the substrate binding site. A substrate-binding site is contributed by 110–114 (NRMGF). FMN contacts are provided by Asn-138 and Asn-171. Position 171 (Asn-171) interacts with substrate. The active-site Nucleophile is Ser-174. Asn-176 contributes to the substrate binding site. Positions 216 and 244 each coordinate FMN. Residue 245-246 (NT) participates in substrate binding. FMN-binding positions include Gly-267, Gly-296, and 317-318 (YT).

This sequence belongs to the dihydroorotate dehydrogenase family. Type 2 subfamily. As to quaternary structure, monomer. Requires FMN as cofactor.

It localises to the cell membrane. The enzyme catalyses (S)-dihydroorotate + a quinone = orotate + a quinol. Its pathway is pyrimidine metabolism; UMP biosynthesis via de novo pathway; orotate from (S)-dihydroorotate (quinone route): step 1/1. Catalyzes the conversion of dihydroorotate to orotate with quinone as electron acceptor. The sequence is that of Dihydroorotate dehydrogenase (quinone) from Azotobacter vinelandii (strain DJ / ATCC BAA-1303).